The primary structure comprises 117 residues: Large ribosomal subunit protein bL20 (117 aa).

This sequence belongs to the bacterial ribosomal protein bL20 family.

Binds directly to 23S ribosomal RNA and is necessary for the in vitro assembly process of the 50S ribosomal subunit. It is not involved in the protein synthesizing functions of that subunit. This is Large ribosomal subunit protein bL20 from Helicobacter hepaticus (strain ATCC 51449 / 3B1).